The sequence spans 182 residues: MKKDTKNLYKEKIVPSLMEEYGYKNVQLVPKLLKISINRGLGEEARSSKEMDANLKELAVIAGQQPTVNKARKSIAGFKIRDGMPVGASVTLRQDRMYAFLERLIHITLPRVRDFRGISAEGFDGRGNYNLGIKDQLIFPEISYDDVNQLQGFDISIVTSANTDEEAYSLLKKFGMPLQARA.

The protein belongs to the universal ribosomal protein uL5 family. In terms of assembly, part of the 50S ribosomal subunit; contacts the 5S rRNA.

It is found in the plastid. It localises to the chloroplast. Functionally, binds 5S rRNA, forms part of the central protuberance of the 50S subunit. This Emiliania huxleyi (Coccolithophore) protein is Large ribosomal subunit protein uL5c (rpl5).